The chain runs to 443 residues: Phosphoglucosamine mutase (443 aa).

Catalysis depends on Ser-100, which acts as the Phosphoserine intermediate. Residues Ser-100, Asp-240, Asp-242, and Asp-244 each coordinate Mg(2+). Position 100 is a phosphoserine (Ser-100).

The protein belongs to the phosphohexose mutase family. The cofactor is Mg(2+). In terms of processing, activated by phosphorylation.

The catalysed reaction is alpha-D-glucosamine 1-phosphate = D-glucosamine 6-phosphate. In terms of biological role, catalyzes the conversion of glucosamine-6-phosphate to glucosamine-1-phosphate. The polypeptide is Phosphoglucosamine mutase (Carboxydothermus hydrogenoformans (strain ATCC BAA-161 / DSM 6008 / Z-2901)).